The chain runs to 1662 residues: Cortactin-binding protein 2 (1662 aa).

Disordered stretches follow at residues 1–23, 203–222, 361–440, 454–479, and 498–618; these read MATD…AGAA, KKKT…RSTE, SHSD…LHPG, GNAN…PTSR, and RFTS…PSID. A coiled-coil region spans residues 119–276; that stretch reads KKMQERMSAQ…EQLKRGSDSK (158 aa). Low complexity predominate over residues 386-396; sequence PSTDSTPDPTS. Over residues 411-422 the composition is skewed to polar residues; it reads QTPGIAPQNSQA. R498 carries the asymmetric dimethylarginine modification. Polar residues predominate over residues 583 to 597; the sequence is TVASPPSSLPQGNRV. ANK repeat units follow at residues 709–739, 743–772, 776–805, 809–838, 842–871, and 912–942; these read GRPT…DINY, DGHS…QINA, NGFT…NINH, GGQT…NRSV, DGWT…PACG, and EGWT…EPER. Positions 1450 to 1474 are disordered; sequence GESGAWRKVNTSPRRKSGRFSLPTW. S1524 is modified (phosphoserine). 2 disordered regions span residues 1580–1602 and 1618–1662; these read SQKE…KSKT and SKVT…KPNK. A compositionally biased stretch (polar residues) spans 1582–1599; it reads KEVSPLSSHQTTECSNSK. Residues 1624-1638 show a composition bias toward low complexity; sequence SQNTKRSSSSSNTRQ. The segment covering 1639-1648 has biased composition (polar residues); the sequence is IEINNNSKEN. The span at 1649–1662 shows a compositional bias: basic and acidic residues; the sequence is WNLHKNEHLDKPNK.

As to quaternary structure, interacts with CTTN/cortactin SH3 domain. Interacts with STRN, STRN4/zinedin and MOB4/phocein; this interactions mediate the association with the STRIPAK core complex and may regulate dendritic spine distribution of the STRIPAK complex in hippocampal neurons. Activation of glutamate receptors weakens the interaction with STRN and STRN4.

It is found in the cytoplasm. The protein resides in the cell cortex. It localises to the cell projection. The protein localises to the dendritic spine. Regulates the dendritic spine distribution of CTTN/cortactin in hippocampal neurons, and thus controls dendritic spinogenesis and dendritic spine maintenance. Associates with the striatin-interacting phosphatase and kinase (STRIPAK) core complex to regulate dendritic spine distribution of the STRIPAK complex in hippocampal neurons. This is Cortactin-binding protein 2 (CTTNBP2) from Chlorocebus aethiops (Green monkey).